Here is a 671-residue protein sequence, read N- to C-terminus: UBA domain-containing protein RUP1 (671 aa).

Residues M1 to N41 enclose the UBA domain. At S56 the chain carries Phosphoserine. The disordered stretch occupies residues G68 to V87. The stretch at S432–E501 forms a coiled coil. The segment at D643–N671 is disordered. Residues N661–N671 show a composition bias toward acidic residues.

As to quaternary structure, forms a ternary complex with RSP5 and UBP2.

Its subcellular location is the cytoplasm. The protein localises to the nucleus. Modulates the activity of the RSP5 HECT ubiquitin-protein ligase through its mediation of the interaction between RSP5 and the deubiquitinase UBP2. Involved in regulation of cell wall homeostasis. This chain is UBA domain-containing protein RUP1 (RUP1), found in Saccharomyces cerevisiae (strain ATCC 204508 / S288c) (Baker's yeast).